The primary structure comprises 400 residues: Serine/threonine transporter SstT (400 aa).

Helical transmembrane passes span 9–29 (LVTQ…VWPA), 36–56 (ILGS…VFVL), 75–95 (VLVL…VASM), 134–154 (ALLE…GLAL), 175–195 (VIQL…ASTF), 209–229 (LLAV…PLIV), 281–301 (IAIP…ISVL), 323–343 (VVAS…LLLI), and 349–369 (LFGI…IIGI).

Belongs to the dicarboxylate/amino acid:cation symporter (DAACS) (TC 2.A.23) family.

Its subcellular location is the cell inner membrane. It carries out the reaction L-serine(in) + Na(+)(in) = L-serine(out) + Na(+)(out). The catalysed reaction is L-threonine(in) + Na(+)(in) = L-threonine(out) + Na(+)(out). In terms of biological role, involved in the import of serine and threonine into the cell, with the concomitant import of sodium (symport system). The polypeptide is Serine/threonine transporter SstT (Acidovorax sp. (strain JS42)).